Consider the following 404-residue polypeptide: Nicotinate phosphoribosyltransferase (404 aa).

The residue at position 225 (H225) is a Phosphohistidine; by autocatalysis.

Belongs to the NAPRTase family. Transiently phosphorylated on a His residue during the reaction cycle. Phosphorylation strongly increases the affinity for substrates and increases the rate of nicotinate D-ribonucleotide production. Dephosphorylation regenerates the low-affinity form of the enzyme, leading to product release.

The enzyme catalyses nicotinate + 5-phospho-alpha-D-ribose 1-diphosphate + ATP + H2O = nicotinate beta-D-ribonucleotide + ADP + phosphate + diphosphate. The protein operates within cofactor biosynthesis; NAD(+) biosynthesis; nicotinate D-ribonucleotide from nicotinate: step 1/1. Its function is as follows. Catalyzes the synthesis of beta-nicotinate D-ribonucleotide from nicotinate and 5-phospho-D-ribose 1-phosphate at the expense of ATP. This Methanosarcina acetivorans (strain ATCC 35395 / DSM 2834 / JCM 12185 / C2A) protein is Nicotinate phosphoribosyltransferase.